We begin with the raw amino-acid sequence, 137 residues long: Outer membrane protein assembly factor BamE (137 aa).

Positions 1–18 (MQVKTLLGATFLALSLAS) are cleaved as a signal peptide. Cysteine 19 is lipidated: N-palmitoyl cysteine. A lipid anchor (S-diacylglycerol cysteine) is attached at cysteine 19.

This sequence belongs to the BamE family. Part of the Bam complex.

The protein resides in the cell outer membrane. Its function is as follows. Part of the outer membrane protein assembly complex, which is involved in assembly and insertion of beta-barrel proteins into the outer membrane. In Haemophilus influenzae (strain ATCC 51907 / DSM 11121 / KW20 / Rd), this protein is Outer membrane protein assembly factor BamE.